The chain runs to 142 residues: Large ribosomal subunit protein uL11 (142 aa).

It belongs to the universal ribosomal protein uL11 family. As to quaternary structure, part of the ribosomal stalk of the 50S ribosomal subunit. Interacts with L10 and the large rRNA to form the base of the stalk. L10 forms an elongated spine to which L12 dimers bind in a sequential fashion forming a multimeric L10(L12)X complex. In terms of processing, one or more lysine residues are methylated.

Functionally, forms part of the ribosomal stalk which helps the ribosome interact with GTP-bound translation factors. The protein is Large ribosomal subunit protein uL11 of Baumannia cicadellinicola subsp. Homalodisca coagulata.